We begin with the raw amino-acid sequence, 314 residues long: Acetyl-coenzyme A carboxylase carboxyl transferase subunit beta (314 aa).

Residues 37-307 (LWQKCPACDA…MSLPALEPTY (271 aa)) enclose the CoA carboxyltransferase N-terminal domain. Residues C41, C44, C60, and C63 each contribute to the Zn(2+) site. The C4-type zinc finger occupies 41–63 (CPACDALTYTKDLQQNWQVCPSC).

The protein belongs to the AccD/PCCB family. In terms of assembly, acetyl-CoA carboxylase is a heterohexamer composed of biotin carboxyl carrier protein (AccB), biotin carboxylase (AccC) and two subunits each of ACCase subunit alpha (AccA) and ACCase subunit beta (AccD). Zn(2+) serves as cofactor.

The protein resides in the cytoplasm. The enzyme catalyses N(6)-carboxybiotinyl-L-lysyl-[protein] + acetyl-CoA = N(6)-biotinyl-L-lysyl-[protein] + malonyl-CoA. It functions in the pathway lipid metabolism; malonyl-CoA biosynthesis; malonyl-CoA from acetyl-CoA: step 1/1. Component of the acetyl coenzyme A carboxylase (ACC) complex. Biotin carboxylase (BC) catalyzes the carboxylation of biotin on its carrier protein (BCCP) and then the CO(2) group is transferred by the transcarboxylase to acetyl-CoA to form malonyl-CoA. The polypeptide is Acetyl-coenzyme A carboxylase carboxyl transferase subunit beta (Synechococcus sp. (strain JA-3-3Ab) (Cyanobacteria bacterium Yellowstone A-Prime)).